Consider the following 204-residue polypeptide: Imidazoleglycerol-phosphate dehydratase (204 aa).

The protein belongs to the imidazoleglycerol-phosphate dehydratase family.

It is found in the cytoplasm. The catalysed reaction is D-erythro-1-(imidazol-4-yl)glycerol 3-phosphate = 3-(imidazol-4-yl)-2-oxopropyl phosphate + H2O. Its pathway is amino-acid biosynthesis; L-histidine biosynthesis; L-histidine from 5-phospho-alpha-D-ribose 1-diphosphate: step 6/9. This Rhodococcus opacus (strain B4) protein is Imidazoleglycerol-phosphate dehydratase.